We begin with the raw amino-acid sequence, 204 residues long: Recombination protein RecR (204 aa).

Residues 63–78 (CRICFNVADSELCPIC) form a C4-type zinc finger. The Toprim domain occupies 86–181 (NKICVVEQPQ…KVTRLARGLP (96 aa)).

Belongs to the RecR family.

Its function is as follows. May play a role in DNA repair. It seems to be involved in an RecBC-independent recombinational process of DNA repair. It may act with RecF and RecO. This chain is Recombination protein RecR, found in Dehalococcoides mccartyi (strain ATCC BAA-2266 / KCTC 15142 / 195) (Dehalococcoides ethenogenes (strain 195)).